We begin with the raw amino-acid sequence, 127 residues long: Ribosome-binding factor A (127 aa).

The protein belongs to the RbfA family. In terms of assembly, monomer. Binds 30S ribosomal subunits, but not 50S ribosomal subunits or 70S ribosomes.

It is found in the cytoplasm. In terms of biological role, one of several proteins that assist in the late maturation steps of the functional core of the 30S ribosomal subunit. Associates with free 30S ribosomal subunits (but not with 30S subunits that are part of 70S ribosomes or polysomes). Required for efficient processing of 16S rRNA. May interact with the 5'-terminal helix region of 16S rRNA. The sequence is that of Ribosome-binding factor A from Chloroflexus aggregans (strain MD-66 / DSM 9485).